A 199-amino-acid chain; its full sequence is MALLLFNDHYYGFLHKYKRHTGSYDNLFNLRCSKEDHYLNSLDAIWLMGCCEEFTDPALRAHALAIATESNIGLVNNNAVISDERLKCWLCKKPSHQQTEHLKLILLPNLVNGFQFATESYHICLKDHSGDDPTQYLSEFSFPTGLRAYYKPHQKMEHKHIVVTNGIPISKNFNEIALPDPSPSDDYVLVGAHECPILM.

It localises to the host cytoplasm. The chain is Protein p2 from Avena sativa (Oat).